The following is a 434-amino-acid chain: MTTINLIIFTLLIVLTAFFVATEFAIVKIRSSKIDQLILEGKKGAISAKKVITHLDEYLSACQLGITVTALGIGWVGESTFEVILHPLFAHFHVSETVSHVLILVIAFVMATFLHVVVGELAPKTLAIQKAETITLLTAKPIIWFYRILFPFIWFLNGSARFIVGLFGLKPASEHELAHSEEELRILLSESYKSGEINQNELKYVNNIFEFDERIAKEIMIPRREIVAISSEDSYETIVKIIKTESYTRYPVLNGDKDSIIGFINAKEFLSAYIDTDQKIKEDFKLENHINPVIHVIESVPIHDVLVKMQKERTHIAILVDEYGGTSGLVTAEDILEEIVGEIRDEFDKDEVPNIRKVNDNHYILDSKVLIEDVNDLLGTTLASDEVDTIGGWFMTQQIDAAVGSVIEADGYIFKVHETVGRHINYLEIVRKKE.

In terms of domain architecture, CNNM transmembrane spans 1-201 (MTTINLIIFT…YKSGEINQNE (201 aa)). The next 3 membrane-spanning stretches (helical) occupy residues 7 to 27 (IIFT…FAIV), 64 to 84 (LGIT…FEVI), and 101 to 121 (VLIL…VGEL). 2 CBS domains span residues 220–282 (MIPR…KIKE) and 289–346 (HINP…IRDE).

This sequence belongs to the UPF0053 family.

It is found in the cell membrane. In Bacillus subtilis (strain 168), this protein is UPF0053 protein YrkA (yrkA).